A 719-amino-acid polypeptide reads, in one-letter code: Polyribonucleotide nucleotidyltransferase (719 aa).

Mg(2+)-binding residues include aspartate 490 and aspartate 496. The 63-residue stretch at 557-619 folds into the KH domain; sequence PKIEIIIIPK…KSIDAALTRI (63 aa). Residues 629–699 enclose the S1 motif domain; sequence GEIYEGKIRS…KTGKFKLSHK (71 aa).

The protein belongs to the polyribonucleotide nucleotidyltransferase family. Requires Mg(2+) as cofactor.

It is found in the cytoplasm. The catalysed reaction is RNA(n+1) + phosphate = RNA(n) + a ribonucleoside 5'-diphosphate. In terms of biological role, involved in mRNA degradation. Catalyzes the phosphorolysis of single-stranded polyribonucleotides processively in the 3'- to 5'-direction. The polypeptide is Polyribonucleotide nucleotidyltransferase (Azobacteroides pseudotrichonymphae genomovar. CFP2).